Reading from the N-terminus, the 84-residue chain is Small ribosomal subunit protein eS27 (84 aa).

Positions 1-16 (MPLAKDPLHPSPEEEK) are enriched in basic and acidic residues. Positions 1–25 (MPLAKDPLHPSPEEEKRKHKKKRLV) are disordered. Phosphoserine is present on Ser-11. A C4-type zinc finger spans residues 38–60 (PGCYKITTVFSHAQTVVLCVGCS).

It belongs to the eukaryotic ribosomal protein eS27 family. In terms of assembly, component of the small ribosomal subunit. Part of the small subunit (SSU) processome, composed of more than 70 proteins and the RNA chaperone small nucleolar RNA (snoRNA) U3. Requires Zn(2+) as cofactor.

Its subcellular location is the cytoplasm. The protein resides in the nucleus. The protein localises to the nucleolus. In terms of biological role, component of the small ribosomal subunit. The ribosome is a large ribonucleoprotein complex responsible for the synthesis of proteins in the cell. Required for proper rRNA processing and maturation of 18S rRNAs. Part of the small subunit (SSU) processome, first precursor of the small eukaryotic ribosomal subunit. During the assembly of the SSU processome in the nucleolus, many ribosome biogenesis factors, an RNA chaperone and ribosomal proteins associate with the nascent pre-rRNA and work in concert to generate RNA folding, modifications, rearrangements and cleavage as well as targeted degradation of pre-ribosomal RNA by the RNA exosome. The sequence is that of Small ribosomal subunit protein eS27 (RPS27) from Pongo abelii (Sumatran orangutan).